Consider the following 363-residue polypeptide: MGRFKRHHEGDSDSSSSASDSLSRGRRSLGHKRSSHIKNRQYYILEKKIRKLMFAMKALLEETKHSTKDDVNLVIPGSTWSHIEGVYEMLKSRHDRQNEPVIEEPSSHPKNQKNQENNEPTSEEFEEGEYPPPLPPLRSEKLKEQVFMHISRAYEIYPNQSNPNELLDIHNERLEFLGDSFFNLFTTRIIFSKFPQMDEGSLSKLRAKFVGNESADKFARLYGFDKTLVLSYSAEKDQLRKSQKVIADTFEAYLGALILDGQEETAFQWVSRLLQPKIANITVQRPIDKLAKSKLFHKYSTLGHIEYRWVDGAGGSAEGYVIACIFNGKEVARAWGANQKDAGSRAAMQALEVLAKDYSKFAR.

Disordered regions lie at residues 1 to 35 (MGRF…KRSS) and 92 to 138 (SRHD…PPLR). Low complexity predominate over residues 13–22 (DSSSSASDSL). The span at 24-35 (RGRRSLGHKRSS) shows a compositional bias: basic residues. S122 is subject to Phosphoserine. The 124-residue stretch at 139 to 262 (SEKLKEQVFM…YLGALILDGQ (124 aa)) folds into the RNase III domain. Residues 285-356 (RPIDKLAKSK…AMQALEVLAK (72 aa)) enclose the DRBM domain.

Mg(2+) serves as cofactor.

The enzyme catalyses Endonucleolytic cleavage to 5'-phosphomonoester.. In terms of biological role, digests double-stranded RNA. Converts long double-stranded RNAs into short oligonucleotides, leaving 5'-phosphates on their cleavage products. Probably inhibits mating and meiosis by degrading a specific mRNA required for sexual development. The chain is Double-strand-specific pac1 ribonuclease (pac1) from Schizosaccharomyces pombe (strain 972 / ATCC 24843) (Fission yeast).